A 464-amino-acid polypeptide reads, in one-letter code: Zinc transporter 6-A (464 aa).

The Cytoplasmic segment spans residues 1-33; it reads MGTIYLFRKTQRSLLGKLAQEFRLVTADRRSWK. A helical membrane pass occupies residues 34–54; the sequence is ILLFGAINVVCTAFLLTWCSS. Residues 55 to 64 are Extracellular-facing; it reads TNSMALTAYT. Residues 65–85 traverse the membrane as a helical segment; the sequence is YLTIFDLFSLITSLISYWVTM. Residues 86-98 are Cytoplasmic-facing; it reads KKPSPTYSFGFER. The chain crosses the membrane as a helical span at residues 99-119; it reads FEVLAVFASTVLAQLGALFIL. Over 120-134 the chain is Extracellular; that stretch reads KESAERFIEQPEIHT. The helical transmembrane segment at 135–155 threads the bilayer; it reads GRLLVGTFVALFFNLFTMLSI. At 156 to 200 the chain is on the cytoplasmic side; that stretch reads RNKPFAYVSDAASTSWLQEHVADLSRSLCGIIPGLSSIFLPRMNP. The chain crosses the membrane as a helical span at residues 201–221; sequence FVLIDIAGALALCITYMLIEI. Topologically, residues 222–223 are extracellular; the sequence is NN. Residues 224–244 form a helical membrane-spanning segment; it reads YFAVDTASAVAIAVMTFGTMY. At 245–464 the chain is on the cytoplasmic side; the sequence is PMSVYSGKVL…TPGQFTQFRQ (220 aa).

The protein belongs to the cation diffusion facilitator (CDF) transporter (TC 2.A.4) family. SLC30A subfamily. In terms of assembly, heterodimer with SLC30A5; form a functional zinc ion transmembrane transporter.

The protein resides in the golgi apparatus. It is found in the trans-Golgi network membrane. Functionally, has probably no intrinsic transporter activity but together with SLC30A5 forms a functional zinc ion:proton antiporter heterodimer, mediating zinc entry into the lumen of organelles along the secretory pathway. As part of that zinc ion:proton antiporter, contributes to zinc ion homeostasis within the early secretory pathway and regulates the activation and folding of enzymes like alkaline phosphatases and enzymes involved in phosphatidylinositol glycan anchor biosynthesis. This Xenopus laevis (African clawed frog) protein is Zinc transporter 6-A (slc30a6-a).